A 628-amino-acid chain; its full sequence is MSEKKYTFETEVDKLLHLVIHSLYSNREIFLRELVSNSSDAIEKLRYESISNAALNEDDTDYAIRIDFDKDAKTITVSDNGIGMTEEEVIENLGTIAKSGTKKFLESLTGDKSKDNELIGQFGVGFYSSFIVADKVTVRTRKAGQDKSQATKWVSDAQNGFTVETITKEKRGTEVILHIKKEHLDLLEYHVLKGLVNKYSDCINTSIQMKKVEYDKDGKQTVKDEYETVNNTKAIWLRSKDEVTDEEYQEFYKYISHDFADALMWIHNKVEGNLEYNSLLYIPQNKPFDFWNRDKDYGLSLYVRRVFIMENKELLPPYLRFVKGVIDSADLPLNVSREILQHNKVIDKIKKAITTKILSELKKLASKDKEKYQKFWDSFGQVLKEGVSDDYSNKEKIAGLLRFATTQSGDSKQTVSLADYISRMKEGQDTIYYITSDSYKAAANNPQLEAFKKKGIEVILMTDRIDEWMMSTLTEFDGKHMKSIIKGDIDLDRFETPENKEKFEKEAKDFEKVLKEIKEVLKDKVEDVRLSKRLTDSPSCVVVNDYGMSLHMQKMMEEAGQSFMPGMGMKPILELNAEHNLVQKLKNEADTEIFADLSELLLLQAMFVEGAKIEDPMAFVKLVNKYIR.

Positions 1 to 337 (MSEKKYTFET…SADLPLNVSR (337 aa)) are a; substrate-binding. A b region spans residues 338–554 (EILQHNKVID…DYGMSLHMQK (217 aa)). The segment at 555–628 (MMEEAGQSFM…FVKLVNKYIR (74 aa)) is c.

Belongs to the heat shock protein 90 family. In terms of assembly, homodimer.

The protein localises to the cytoplasm. Molecular chaperone. Has ATPase activity. The chain is Chaperone protein HtpG from Francisella tularensis subsp. tularensis (strain FSC 198).